The chain runs to 976 residues: Ephrin type-A receptor 1 (976 aa).

The signal sequence occupies residues Met1–Ala25. Residues Lys26–Glu547 are Extracellular-facing. The 183-residue stretch at Glu27–Asn209 folds into the Eph LBD domain. Fibronectin type-III domains are found at residues Pro332–Ala445 and Ser447–Pro538. N-linked (GlcNAc...) asparagine glycosylation occurs at Asn414. A helical membrane pass occupies residues Ile548–Phe568. Residues Arg569–Asp976 are Cytoplasmic-facing. 2 positions are modified to phosphotyrosine; by autocatalysis: Tyr599 and Tyr605. The Protein kinase domain maps to Leu624–Leu884. ATP-binding positions include Ile630–Val638 and Lys656. Asp749 functions as the Proton acceptor in the catalytic mechanism. Tyr781 carries the post-translational modification Phosphotyrosine; by autocatalysis. Phosphoserine is present on residues Ser906 and Ser910. An SAM domain is found at Ile913–Asp976. At Tyr930 the chain carries Phosphotyrosine; by autocatalysis. A PDZ-binding motif is present at residues Phe974 to Asp976.

Belongs to the protein kinase superfamily. Tyr protein kinase family. Ephrin receptor subfamily. In terms of assembly, homodimer. Forms a signaling complex with LCK; PTK2B/PYK2 and PI3-kinase upon activation by EFNA1; regulates T-lymphocytes migration. Interacts (via SAM domain) with ILK (via ANK repeats); stimulated by EFNA1 but independent of the kinase activity of EPHA1. Interacts (kinase activity-dependent) with PTK2/FAK1. Post-translationally, phosphorylated. Autophosphorylation is stimulated by its ligand EFNA1. Ubiquitinated. Overexpressed in several carcinomas.

It localises to the cell membrane. It carries out the reaction L-tyrosyl-[protein] + ATP = O-phospho-L-tyrosyl-[protein] + ADP + H(+). Its function is as follows. Receptor tyrosine kinase which binds promiscuously membrane-bound ephrin-A family ligands residing on adjacent cells, leading to contact-dependent bidirectional signaling into neighboring cells. The signaling pathway downstream of the receptor is referred to as forward signaling while the signaling pathway downstream of the ephrin ligand is referred to as reverse signaling. Binds with a low affinity EFNA3 and EFNA4 and with a high affinity to EFNA1 which most probably constitutes its cognate/functional ligand. Upon activation by EFNA1 induces cell attachment to the extracellular matrix inhibiting cell spreading and motility through regulation of ILK and downstream RHOA and RAC. Also plays a role in angiogenesis and regulates cell proliferation. May play a role in apoptosis. This chain is Ephrin type-A receptor 1 (EPHA1), found in Homo sapiens (Human).